The sequence spans 359 residues: MRILGIETSCDETAAAIVERDGQGEGRILSNVVLSQIAEHEPYGGVVPEIAARAHVEALDRLVARALEDADMKLADVDAVAATAGPGLIGGLIVGLMTAKALAMAAQKPFYAVNHLEGHALTARLTDGLPFPYLLLLVSGGHTQMVLIRGIGDYERLGTTIDDALGEAFDKTAKLLGLPYPGGPAVERMALQGNPKRFALPRPLKGEARLDFSFSGLKTAVRQTATELVPLSDQDVADICASFQAAVADTLSDRVGRSLERFRNEFPDCETPALVVAGGVAANKTLRAALETLCARHGFSFIAPPLDLCTDNAAMIAWAGAERAATEAPDSLDLAPRSRWPLDEKSAPLIGTGRRGAKA.

Residues His115 and His119 each contribute to the Fe cation site. Residues 137–141, Asp170, Gly183, and Asn283 each bind substrate; that span reads LVSGG. Asp311 serves as a coordination point for Fe cation. Residues 328 to 359 form a disordered region; sequence APDSLDLAPRSRWPLDEKSAPLIGTGRRGAKA.

Belongs to the KAE1 / TsaD family. Fe(2+) serves as cofactor.

The protein localises to the cytoplasm. The enzyme catalyses L-threonylcarbamoyladenylate + adenosine(37) in tRNA = N(6)-L-threonylcarbamoyladenosine(37) in tRNA + AMP + H(+). Functionally, required for the formation of a threonylcarbamoyl group on adenosine at position 37 (t(6)A37) in tRNAs that read codons beginning with adenine. Is involved in the transfer of the threonylcarbamoyl moiety of threonylcarbamoyl-AMP (TC-AMP) to the N6 group of A37, together with TsaE and TsaB. TsaD likely plays a direct catalytic role in this reaction. This is tRNA N6-adenosine threonylcarbamoyltransferase from Brucella anthropi (strain ATCC 49188 / DSM 6882 / CCUG 24695 / JCM 21032 / LMG 3331 / NBRC 15819 / NCTC 12168 / Alc 37) (Ochrobactrum anthropi).